The following is a 1070-amino-acid chain: Regulator of Ty1 transposition protein 107 (1070 aa).

4 consecutive BRCT domains span residues 2–103, 117–213, 260–352, and 369–453; these read STSL…QDSV, NPFH…LYHF, HPNK…FYMF, and PFHA…EQCY. S304 carries the post-translational modification Phosphoserine. Residue T532 is modified to Phosphothreonine. The tract at residues 572-659 is disordered; the sequence is SRASFPVVDS…LQVQLGQRTK (88 aa). The span at 580–592 shows a compositional bias: basic and acidic residues; it reads DSKKSNLQKKDSN. Phosphoserine occurs at positions 591 and 593. 2 stretches are compositionally biased toward basic and acidic residues: residues 603–615 and 622–645; these read CEGH…KEFT and DAPK…KKEE. A Phosphoserine modification is found at S720. Residues 722 to 731 are compositionally biased toward basic and acidic residues; sequence NDDHINDEKP. Residues 722–753 are disordered; that stretch reads NDDHINDEKPAVNSKYTTPKTSQNITSGVDTP. Positions 735 to 753 are enriched in polar residues; the sequence is SKYTTPKTSQNITSGVDTP. A phosphoserine mark is found at S800 and S806. BRCT domains lie at 829-910 and 934-1049; these read FNEL…IDLL and GINE…CVES.

Forms a complex with the cullin-RING ligase (CRL) RTT101(MMS1-MMS22). Interacts with MMS22 and RTT101. Interacts with histone H2A; requires H2A to be phosphorylated (gamma-H2A). Interacts with RAD55. Post-translationally, phosphorylated by MEC1.

It is found in the nucleus. Functionally, required for resumption of chromosome replication after DNA damage, specifically in S phase. Is recruited to chromatin in the presence of RTT109 and RTT101 in response to stalled replication forks and acts as a scaffold during DNA repair. The sequence is that of Regulator of Ty1 transposition protein 107 (RTT107) from Saccharomyces cerevisiae (strain ATCC 204508 / S288c) (Baker's yeast).